The following is a 389-amino-acid chain: Sedoheptulose-1,7-bisphosphatase, chloroplastic (389 aa).

An intrachain disulfide couples Cys115 to Cys120. The Mg(2+) site is built by Asp126, Glu155, Asp173, Leu175, and Asp176. Residues 176–179 (DGSS), Tyr287, and Lys317 contribute to the substrate site. Position 323 (Glu323) interacts with Mg(2+).

Belongs to the FBPase class 1 family. Homodimer. Requires Mg(2+) as cofactor.

It is found in the plastid. The protein localises to the chloroplast. It carries out the reaction D-sedoheptulose 1,7-bisphosphate + H2O = D-sedoheptulose 7-phosphate + phosphate. The protein operates within carbohydrate biosynthesis; Calvin cycle. This chain is Sedoheptulose-1,7-bisphosphatase, chloroplastic (CSBP), found in Chlamydomonas reinhardtii (Chlamydomonas smithii).